The primary structure comprises 240 residues: ATP synthase subunit a 1 (240 aa).

Helical transmembrane passes span 23–43 (GQVLITSWIVIGILVIVSVLA), 82–102 (VPFIGTLFLFIFVSNWSGALF), 120–140 (DINTTVALALCTSFVYFYAGF), 186–206 (LVVAVLVLLVPLIVPLPVMLL), and 207–227 (GLFTSGIQALVFATLAGAYIH).

The protein belongs to the ATPase A chain family. In terms of assembly, F-type ATPases have 2 components, CF(1) - the catalytic core - and CF(0) - the membrane proton channel. CF(1) has five subunits: alpha(3), beta(3), gamma(1), delta(1), epsilon(1). CF(0) has four main subunits: a, b, b' and c.

It localises to the cellular thylakoid membrane. Its function is as follows. Key component of the proton channel; it plays a direct role in the translocation of protons across the membrane. This chain is ATP synthase subunit a 1, found in Acaryochloris marina (strain MBIC 11017).